The sequence spans 172 residues: MSDQQNTQQDDQPFFNIQRVYLKDMSLEQPNSPAIFLESEAPSVEVQVNVGASQLQEGIFEVVVTGTVTTKVQDKVAFLVEAHQAGIFDIRNVPVEQLDPLLGIACPTILYPYLRGNIADVITRAGFQAIHLSEINFQALYEQRLQAAMEEAQGAEGGNSGIVMPDGSQARH.

Residues 152-172 are disordered; sequence AQGAEGGNSGIVMPDGSQARH.

The protein belongs to the SecB family. Homotetramer, a dimer of dimers. One homotetramer interacts with 1 SecA dimer.

It is found in the cytoplasm. One of the proteins required for the normal export of preproteins out of the cell cytoplasm. It is a molecular chaperone that binds to a subset of precursor proteins, maintaining them in a translocation-competent state. It also specifically binds to its receptor SecA. The polypeptide is Protein-export protein SecB (Cupriavidus taiwanensis (strain DSM 17343 / BCRC 17206 / CCUG 44338 / CIP 107171 / LMG 19424 / R1) (Ralstonia taiwanensis (strain LMG 19424))).